The following is a 326-amino-acid chain: Immune-associated nucleotide-binding protein 4 (326 aa).

An AIG1-type G domain is found at 17–225 (EPIKNIVLVG…FTDEMHRKIQ (209 aa)). The tract at residues 26–33 (GRTGNGKS) is G1. Residues 26–34 (GRTGNGKSA) and Ser47 each bind GTP. The segment at 53–57 (GVTMK) is G2. Residues 75 to 78 (DTPG) are G3. Residues 145–148 (TGGD) form a G4 region. Residues 184 to 186 (DNR) form a G5 region. Asn185 contributes to the GTP binding site. The stretch at 217 to 241 (TDEMHRKIQKEAETLREQQKEVESK) forms a coiled coil.

This sequence belongs to the TRAFAC class TrmE-Era-EngA-EngB-Septin-like GTPase superfamily. AIG1/Toc34/Toc159-like paraseptin GTPase family. IAN subfamily. Expressed in radicles of the germinating seeds.

This Arabidopsis thaliana (Mouse-ear cress) protein is Immune-associated nucleotide-binding protein 4.